A 755-amino-acid chain; its full sequence is Xaa-Pro dipeptidyl-peptidase (755 aa).

Residues Ser-348, Asp-468, and His-498 each act as charge relay system in the active site.

This sequence belongs to the peptidase S15 family. In terms of assembly, homodimer.

It localises to the cytoplasm. The enzyme catalyses Hydrolyzes Xaa-Pro-|- bonds to release unblocked, N-terminal dipeptides from substrates including Ala-Pro-|-p-nitroanilide and (sequentially) Tyr-Pro-|-Phe-Pro-|-Gly-Pro-|-Ile.. Removes N-terminal dipeptides sequentially from polypeptides having unsubstituted N-termini provided that the penultimate residue is proline. The chain is Xaa-Pro dipeptidyl-peptidase from Streptococcus thermophilus.